Here is a 353-residue protein sequence, read N- to C-terminus: Casein kinase II subunit alpha (353 aa).

Residues 39 to 324 (YQLVRKLGRG…AREAMDHPYF (286 aa)) enclose the Protein kinase domain. ATP is bound by residues 45–53 (LGRGKYSEV) and Lys-68. Asp-156 functions as the Proton acceptor in the catalytic mechanism. A disordered region spans residues 334–353 (MVSSNSPTPNALQGPISTTE).

The protein belongs to the protein kinase superfamily. Ser/Thr protein kinase family. CK2 subfamily. As to quaternary structure, tetramer of two alpha and two beta chains.

The catalysed reaction is L-seryl-[protein] + ATP = O-phospho-L-seryl-[protein] + ADP + H(+). The enzyme catalyses L-threonyl-[protein] + ATP = O-phospho-L-threonyl-[protein] + ADP + H(+). Functionally, casein kinases are operationally defined by their preferential utilization of acidic proteins such as caseins as substrates. The alpha chain contains the catalytic site. May participate in Wnt signaling. This is Casein kinase II subunit alpha from Spodoptera frugiperda (Fall armyworm).